A 183-amino-acid chain; its full sequence is MDIDPYKEFGATVELLSFLPSDFFPSVRDLLDTVSALYREALKSPEHCSPHHTALRQAILCWGELMTLATWVGNNLEDPASRDLVVNYVNTNMGLKIRQLWWFHISCLTFGRETVLEYLVSFGVWIRTPPAYRPPNAPILSTLPETTVVRRRGRSPRRRTPSPRRRRSQSPRRRRSQSRESQC.

Residues 136-183 (NAPILSTLPETTVVRRRGRSPRRRTPSPRRRRSQSPRRRRSQSRESQC) form a disordered region. The segment covering 149–176 (VRRRGRSPRRRTPSPRRRRSQSPRRRRS) has biased composition (basic residues). 3 positions are modified to phosphoserine; by host: Ser-155, Ser-162, and Ser-170. The stretch at 155-161 (SPRRRTP) is one 1; half-length repeat. A 3 X 8 AA repeats of S-P-R-R-R-[PR]-S-Q region spans residues 155 to 177 (SPRRRTPSPRRRRSQSPRRRRSQ). Positions 158–175 (RRTPSPRRRRSQSPRRRR) match the Bipartite nuclear localization signal motif. 2 consecutive repeat copies span residues 162-169 (SPRRRRSQ) and 170-177 (SPRRRRSQ). The interval 177 to 183 (QSRESQC) is RNA binding.

Belongs to the orthohepadnavirus core antigen family. In terms of assembly, homodimerizes, then multimerizes. Interacts with cytosol exposed regions of viral L glycoprotein present in the reticulum-to-Golgi compartment. Interacts with human FLNB. Phosphorylated form interacts with host importin alpha; this interaction depends on the exposure of the NLS, which itself depends upon genome maturation and/or phosphorylation of the capsid protein. Interacts with host NUP153. Post-translationally, phosphorylated by host SRPK1, SRPK2, and maybe protein kinase C or GAPDH. Phosphorylation is critical for pregenomic RNA packaging. Protein kinase C phosphorylation is stimulated by HBx protein and may play a role in transport of the viral genome to the nucleus at the late step during the viral replication cycle.

The protein resides in the virion. The protein localises to the host cytoplasm. Its function is as follows. Self assembles to form an icosahedral capsid. Most capsids appear to be large particles with an icosahedral symmetry of T=4 and consist of 240 copies of capsid protein, though a fraction forms smaller T=3 particles consisting of 180 capsid proteins. Entering capsids are transported along microtubules to the nucleus. Phosphorylation of the capsid is thought to induce exposure of nuclear localization signal in the C-terminal portion of the capsid protein that allows binding to the nuclear pore complex via the importin (karyopherin-) alpha and beta. Capsids are imported in intact form through the nuclear pore into the nuclear basket, where it probably binds NUP153. Only capsids that contain the mature viral genome can release the viral DNA and capsid protein into the nucleoplasm. Immature capsids get stuck in the basket. Capsids encapsulate the pre-genomic RNA and the P protein. Pre-genomic RNA is reverse-transcribed into DNA while the capsid is still in the cytoplasm. The capsid can then either be directed to the nucleus, providing more genomes for transcription, or bud through the endoplasmic reticulum to provide new virions. In Hepatitis B virus genotype B1 subtype adw (isolate Japan/pJDW233/1988) (HBV-B), this protein is Capsid protein.